The following is a 336-amino-acid chain: Aspartate--ammonia ligase (336 aa).

Belongs to the class-II aminoacyl-tRNA synthetase family. AsnA subfamily.

The protein resides in the cytoplasm. It catalyses the reaction L-aspartate + NH4(+) + ATP = L-asparagine + AMP + diphosphate + H(+). It functions in the pathway amino-acid biosynthesis; L-asparagine biosynthesis; L-asparagine from L-aspartate (ammonia route): step 1/1. The polypeptide is Aspartate--ammonia ligase (Limosilactobacillus fermentum (strain NBRC 3956 / LMG 18251) (Lactobacillus fermentum)).